The primary structure comprises 484 residues: Glycogen synthase (484 aa).

Lys15 contacts ADP-alpha-D-glucose.

It belongs to the glycosyltransferase 1 family. Bacterial/plant glycogen synthase subfamily.

It catalyses the reaction [(1-&gt;4)-alpha-D-glucosyl](n) + ADP-alpha-D-glucose = [(1-&gt;4)-alpha-D-glucosyl](n+1) + ADP + H(+). The protein operates within glycan biosynthesis; glycogen biosynthesis. In terms of biological role, synthesizes alpha-1,4-glucan chains using ADP-glucose. In Bacillus subtilis (strain 168), this protein is Glycogen synthase (glgA).